Here is a 193-residue protein sequence, read N- to C-terminus: DNA damage-inducible transcript 4-like protein (193 aa).

The protein belongs to the DDIT4 family.

It localises to the cytoplasm. Its function is as follows. Inhibits cell growth by regulating the TOR signaling pathway upstream of the TSC1-TSC2 complex and downstream of AKT1. The protein is DNA damage-inducible transcript 4-like protein (DDIT4L) of Pongo abelii (Sumatran orangutan).